The following is an 82-amino-acid chain: Nuclear protein 1 (82 aa).

The disordered stretch occupies residues 1–82 (MATFPPATSA…SERKKRGARR (82 aa)). Positions 17-28 (PEDEDSSLDESD) are enriched in acidic residues. A Nuclear localization signal motif is present at residues 65–82 (KLVTKLQNSERKKRGARR).

Belongs to the NUPR family. In terms of assembly, monomer. Directly interacts with MSL1 and binds MORF4L1, two components of histone acetyltransferase complex; the interaction with MORF4L1 may be mediated by MSL1. Interacts with EP300; this interaction enhances the effect of EP300 on PAX2 transcription factor activity. Interacts with PAXIP1; this interaction prevents PAXIP1 inhibition of PAX2 transcription factor activity. Interacts with COPS5; this interaction allows COPS5-dependent CDKN1B nuclear to cytoplasm translocation. Interacts with RNF2. Interacts with FOXO3; this interaction represses FOXO3 transactivation. Interacts with PTMA; negatively regulates apoptotic process. Interacts with MYOD1, EP300 and DDX5; this interaction coordinates the association of anti-proliferative and pro-myogenic proteins at the myogenin promoter. Interacts with TP53; interaction is stress-dependent. Forms a complex with EP300 and TP53; this complex binds CDKN1A promoter leading to transcriptional induction of CDKN1A. Post-translationally, phosphorylated in vitro by PKA and CK. Phosphorylation promotes DNA-binding activity. In terms of processing, acetylated by EP300 in vitro. In terms of tissue distribution, widely expressed, with high levels in liver, pancreas, prostate, ovary, colon, thyroid, spinal cord, trachea and adrenal gland, moderate levels in heart, placenta, lung, skeletal muscle, kidney, testis, small intestine, stomach and lymph node, and low levels in brain, spleen, thymus and bone marrow. Not detected in peripheral blood leukocytes.

It localises to the nucleus. The protein localises to the cytoplasm. The protein resides in the perinuclear region. Functionally, transcription regulator that converts stress signals into a program of gene expression that empowers cells with resistance to the stress induced by a change in their microenvironment. Thereby participates in the regulation of many processes namely cell-cycle, apoptosis, autophagy and DNA repair responses. Controls cell cycle progression and protects cells from genotoxic stress induced by doxorubicin through the complex formation with TP53 and EP300 that binds CDKN1A promoter leading to transcriptional induction of CDKN1A. Protects pancreatic cancer cells from stress-induced cell death by binding the RELB promoter and activating its transcription, leading to IER3 transactivation. Negatively regulates apoptosis through interaction with PTMA. Inhibits autophagy-induced apoptosis in cardiac cells through FOXO3 interaction, inducing cytoplasmic translocation of FOXO3 thereby preventing the FOXO3 association with the pro-autophagic BNIP3 promoter. Inhibits cell growth and facilitates programmed cell death by apoptosis after adriamycin-induced DNA damage through transactivation of TP53. Regulates methamphetamine-induced apoptosis and autophagy through DDIT3-mediated endoplasmic reticulum stress pathway. Participates in DNA repair following gamma-irradiation by facilitating DNA access of the transcription machinery through interaction with MSL1 leading to inhibition of histone H4' Lys-16' acetylation (H4K16ac). Coactivator of PAX2 transcription factor activity, both by recruiting EP300 to increase PAX2 transcription factor activity and by binding PAXIP1 to suppress PAXIP1-induced inhibition on PAX2. Positively regulates cell cycle progression through interaction with COPS5 inducing cytoplasmic translocation of CDKN1B leading to the CDKN1B degradation. Coordinates, through its interaction with EP300, the assiociation of MYOD1, EP300 and DDX5 to the MYOG promoter, leading to inhibition of cell-cycle progression and myogenic differentiation promotion. Negatively regulates beta cell proliferation via inhibition of cell-cycle regulatory genes expression through the suppression of their promoter activities. Also required for LHB expression and ovarian maturation. Exacerbates CNS inflammation and demyelination upon cuprizone treatment. This chain is Nuclear protein 1, found in Homo sapiens (Human).